The chain runs to 120 residues: NAD(P)H-quinone oxidoreductase subunit 3, chloroplastic (120 aa).

3 helical membrane passes run 9-29 (IFWA…FISG), 64-84 (MFAL…PWAM), and 88-108 (VLGV…ILGL).

This sequence belongs to the complex I subunit 3 family. In terms of assembly, NDH is composed of at least 16 different subunits, 5 of which are encoded in the nucleus.

The protein resides in the plastid. It is found in the chloroplast thylakoid membrane. The enzyme catalyses a plastoquinone + NADH + (n+1) H(+)(in) = a plastoquinol + NAD(+) + n H(+)(out). It carries out the reaction a plastoquinone + NADPH + (n+1) H(+)(in) = a plastoquinol + NADP(+) + n H(+)(out). Its function is as follows. NDH shuttles electrons from NAD(P)H:plastoquinone, via FMN and iron-sulfur (Fe-S) centers, to quinones in the photosynthetic chain and possibly in a chloroplast respiratory chain. The immediate electron acceptor for the enzyme in this species is believed to be plastoquinone. Couples the redox reaction to proton translocation, and thus conserves the redox energy in a proton gradient. The protein is NAD(P)H-quinone oxidoreductase subunit 3, chloroplastic of Barbarea verna (Land cress).